Consider the following 204-residue polypeptide: Redox-sensing transcriptional repressor Rex 2 (204 aa).

The H-T-H motif DNA-binding region spans 17–53 (MYRKVLEATKKPYISSDEIARFLEINPDLVRKDFSYL).

It belongs to the transcriptional regulatory Rex family. In terms of assembly, homodimer.

It localises to the cytoplasm. Functionally, modulates transcription in response to changes in cellular NADH/NAD(+) redox state. The protein is Redox-sensing transcriptional repressor Rex 2 (rex2) of Thermotoga maritima (strain ATCC 43589 / DSM 3109 / JCM 10099 / NBRC 100826 / MSB8).